Reading from the N-terminus, the 238-residue chain is Urease accessory protein UreF (238 aa).

It belongs to the UreF family. UreD, UreF and UreG form a complex that acts as a GTP-hydrolysis-dependent molecular chaperone, activating the urease apoprotein by helping to assemble the nickel containing metallocenter of UreC. The UreE protein probably delivers the nickel.

Its subcellular location is the cytoplasm. Functionally, required for maturation of urease via the functional incorporation of the urease nickel metallocenter. The chain is Urease accessory protein UreF from Rhodopseudomonas palustris (strain BisA53).